A 386-amino-acid chain; its full sequence is MATTKSFLILFFMILATTSSTCAKLEKMVTVLSIDGGGIKGIIPAIILEFLEGQLQEVDNNKDARLADYFDVIGGTSTGGLLTAMITTPNENNRPFAAAKDIVPFYFEHGPHIFNYSGSIIGPMYDGKYLLQVLQEKLGETRVHQALTEVAISSFDIKTNKPVIFTKSNLAKSPELDAKMYDICYSTAAAPIYFPPHYFITHTSNGDIYEFNLVDGGVATVGDPALLSLSVATRLAQEDPAFSSIKSLDYKQMLLLSLGTGTNSEFDKTYTAQEAAKWGPLRWMLAIQQMTNAASSYMTDYYISTVFQARHSQNNYLRVQENALTGTTTEMDDASEANMELLVQVGETLLKKPVSKDSPETYEEALKRFAKLLSDRKKLRANKASY.

The signal sequence occupies residues 1 to 23; the sequence is MATTKSFLILFFMILATTSSTCA. The PNPLA domain maps to 32–229; sequence LSIDGGGIKG…TVGDPALLSL (198 aa). Positions 36-41 match the GXGXXG motif; the sequence is GGGIKG. The GXSXG signature appears at 75-79; the sequence is GTSTG. S77 (nucleophile) is an active-site residue. N115 carries N-linked (GlcNAc...) asparagine glycosylation. D215 serves as the catalytic Proton acceptor. Residues 215 to 217 carry the DGA/G motif; sequence DGG. Residues 321–384 adopt a coiled-coil conformation; it reads ENALTGTTTE…DRKKLRANKA (64 aa).

Belongs to the patatin family. In terms of tissue distribution, tuber.

It localises to the vacuole. In terms of biological role, probable lipolytic acyl hydrolase (LAH), an activity which is thought to be involved in the response of tubers to pathogens. This chain is Patatin group M-2, found in Solanum tuberosum (Potato).